A 349-amino-acid polypeptide reads, in one-letter code: Dihydroorotate dehydrogenase (quinone) (349 aa).

FMN contacts are provided by residues 65–69 (AGFDK) and alanine 89. Lysine 69 is a substrate binding site. Position 114 to 118 (114 to 118 (NRMGF)) interacts with substrate. Asparagine 143 and asparagine 176 together coordinate FMN. Residue asparagine 176 coordinates substrate. Serine 179 acts as the Nucleophile in catalysis. A substrate-binding site is contributed by asparagine 181. 2 residues coordinate FMN: lysine 212 and threonine 240. 241-242 (NT) lines the substrate pocket. A disordered region spans residues 244 to 265 (TERPESLSHPHAGEQGGLSGAP). A compositionally biased stretch (basic and acidic residues) spans 245-255 (ERPESLSHPHA). FMN contacts are provided by residues glycine 263, glycine 290, and 311-312 (YT).

Belongs to the dihydroorotate dehydrogenase family. Type 2 subfamily. Monomer. Requires FMN as cofactor.

Its subcellular location is the cell membrane. It carries out the reaction (S)-dihydroorotate + a quinone = orotate + a quinol. Its pathway is pyrimidine metabolism; UMP biosynthesis via de novo pathway; orotate from (S)-dihydroorotate (quinone route): step 1/1. In terms of biological role, catalyzes the conversion of dihydroorotate to orotate with quinone as electron acceptor. In Halobacterium salinarum (strain ATCC 29341 / DSM 671 / R1), this protein is Dihydroorotate dehydrogenase (quinone).